Consider the following 72-residue polypeptide: Hypertrehalosaemic prohormone (72 aa).

An N-terminal signal peptide occupies residues 1 to 21; the sequence is MNHLVKVLIVVVAIALVLCEA. Pyrrolidone carboxylic acid is present on Gln22. A Threonine amide modification is found at Thr31.

The protein belongs to the AKH/HRTH/RPCH family. As to expression, expressed in corpora cardiaca.

The protein localises to the secreted. Hypertrehalosaemic factors are neuropeptides that elevate the level of trehalose in the hemolymph (trehalose is the major carbohydrate in the hemolymph of insects). The protein is Hypertrehalosaemic prohormone of Blaberus discoidalis (Tropical cockroach).